The chain runs to 311 residues: Porphobilinogen deaminase (311 aa).

C241 carries the S-(dipyrrolylmethanemethyl)cysteine modification.

It belongs to the HMBS family. In terms of assembly, monomer. Dipyrromethane serves as cofactor.

It carries out the reaction 4 porphobilinogen + H2O = hydroxymethylbilane + 4 NH4(+). It functions in the pathway porphyrin-containing compound metabolism; protoporphyrin-IX biosynthesis; coproporphyrinogen-III from 5-aminolevulinate: step 2/4. Tetrapolymerization of the monopyrrole PBG into the hydroxymethylbilane pre-uroporphyrinogen in several discrete steps. This Campylobacter curvus (strain 525.92) protein is Porphobilinogen deaminase.